Reading from the N-terminus, the 151-residue chain is Globin-2 B chain (151 aa).

Position 1 is an N-acetylserine (Ser1). The Globin domain occupies 11–151; sequence VSNADQKDLL…SLVAVVQASL (141 aa). His103 provides a ligand contact to heme b.

This sequence belongs to the globin family. Heterotetramer of two alpha chains and two beta chains.

This is Globin-2 B chain from Anadara inaequivalvis (Inequivalve ark).